Reading from the N-terminus, the 124-residue chain is uncharacterized protein (124 aa).

The helical transmembrane segment at 70-90 (LLYLALVLLLVVILSTAFFSI) threads the bilayer.

It is found in the membrane. This is an uncharacterized protein from Saccharomyces cerevisiae (strain ATCC 204508 / S288c) (Baker's yeast).